The following is a 328-amino-acid chain: 4-hydroxythreonine-4-phosphate dehydrogenase (328 aa).

Residues H135 and T136 each coordinate substrate. Residues H165, H210, and H265 each contribute to the a divalent metal cation site. Substrate is bound by residues K273, N282, and R291.

It belongs to the PdxA family. Homodimer. Requires Zn(2+) as cofactor. It depends on Mg(2+) as a cofactor. Co(2+) is required as a cofactor.

The protein resides in the cytoplasm. It carries out the reaction 4-(phosphooxy)-L-threonine + NAD(+) = 3-amino-2-oxopropyl phosphate + CO2 + NADH. It functions in the pathway cofactor biosynthesis; pyridoxine 5'-phosphate biosynthesis; pyridoxine 5'-phosphate from D-erythrose 4-phosphate: step 4/5. Its function is as follows. Catalyzes the NAD(P)-dependent oxidation of 4-(phosphooxy)-L-threonine (HTP) into 2-amino-3-oxo-4-(phosphooxy)butyric acid which spontaneously decarboxylates to form 3-amino-2-oxopropyl phosphate (AHAP). The chain is 4-hydroxythreonine-4-phosphate dehydrogenase from Enterobacter sp. (strain 638).